The following is a 206-amino-acid chain: Small ribosomal subunit protein uS4 (206 aa).

One can recognise an S4 RNA-binding domain in the interval 96–156; the sequence is TRLDNVVYRM…EKSKKQARII (61 aa).

This sequence belongs to the universal ribosomal protein uS4 family. Part of the 30S ribosomal subunit. Contacts protein S5. The interaction surface between S4 and S5 is involved in control of translational fidelity.

Functionally, one of the primary rRNA binding proteins, it binds directly to 16S rRNA where it nucleates assembly of the body of the 30S subunit. In terms of biological role, with S5 and S12 plays an important role in translational accuracy. This chain is Small ribosomal subunit protein uS4, found in Shewanella woodyi (strain ATCC 51908 / MS32).